The primary structure comprises 503 residues: ATP synthase subunit alpha (503 aa).

Gly-169 to Thr-176 contributes to the ATP binding site.

This sequence belongs to the ATPase alpha/beta chains family. As to quaternary structure, F-type ATPases have 2 components, CF(1) - the catalytic core - and CF(0) - the membrane proton channel. CF(1) has five subunits: alpha(3), beta(3), gamma(1), delta(1), epsilon(1). CF(0) has three main subunits: a(1), b(2) and c(9-12). The alpha and beta chains form an alternating ring which encloses part of the gamma chain. CF(1) is attached to CF(0) by a central stalk formed by the gamma and epsilon chains, while a peripheral stalk is formed by the delta and b chains.

Its subcellular location is the cell membrane. It carries out the reaction ATP + H2O + 4 H(+)(in) = ADP + phosphate + 5 H(+)(out). In terms of biological role, produces ATP from ADP in the presence of a proton gradient across the membrane. The alpha chain is a regulatory subunit. This Lactobacillus delbrueckii subsp. bulgaricus (strain ATCC 11842 / DSM 20081 / BCRC 10696 / JCM 1002 / NBRC 13953 / NCIMB 11778 / NCTC 12712 / WDCM 00102 / Lb 14) protein is ATP synthase subunit alpha.